The sequence spans 98 residues: Large ribosomal subunit protein uL23 (98 aa).

It belongs to the universal ribosomal protein uL23 family. As to quaternary structure, part of the 50S ribosomal subunit. Contacts protein L29, and trigger factor when it is bound to the ribosome.

Its function is as follows. One of the early assembly proteins it binds 23S rRNA. One of the proteins that surrounds the polypeptide exit tunnel on the outside of the ribosome. Forms the main docking site for trigger factor binding to the ribosome. The protein is Large ribosomal subunit protein uL23 of Nitrosococcus oceani (strain ATCC 19707 / BCRC 17464 / JCM 30415 / NCIMB 11848 / C-107).